A 197-amino-acid polypeptide reads, in one-letter code: ATP-dependent Clp protease proteolytic subunit (197 aa).

Serine 101 serves as the catalytic Nucleophile. Residue histidine 126 is part of the active site.

The protein belongs to the peptidase S14 family. In terms of assembly, component of the chloroplastic Clp protease core complex.

The protein localises to the plastid. It is found in the chloroplast stroma. The enzyme catalyses Hydrolysis of proteins to small peptides in the presence of ATP and magnesium. alpha-casein is the usual test substrate. In the absence of ATP, only oligopeptides shorter than five residues are hydrolyzed (such as succinyl-Leu-Tyr-|-NHMec, and Leu-Tyr-Leu-|-Tyr-Trp, in which cleavage of the -Tyr-|-Leu- and -Tyr-|-Trp bonds also occurs).. Its function is as follows. Cleaves peptides in various proteins in a process that requires ATP hydrolysis. Has a chymotrypsin-like activity. Plays a major role in the degradation of misfolded proteins. The polypeptide is ATP-dependent Clp protease proteolytic subunit (Daucus carota (Wild carrot)).